The primary structure comprises 219 residues: Putative GEM-like protein 8 (219 aa).

Residues 96 to 174 (KIYKRLFKVS…CKINGVNQSQ (79 aa)) enclose the GRAM domain.

Belongs to the GEM family.

This Arabidopsis thaliana (Mouse-ear cress) protein is Putative GEM-like protein 8.